The chain runs to 151 residues: D-aminoacyl-tRNA deacylase (151 aa).

A Gly-cisPro motif, important for rejection of L-amino acids motif is present at residues Gly-137 to Pro-138.

Belongs to the DTD family. In terms of assembly, homodimer.

It localises to the cytoplasm. It carries out the reaction glycyl-tRNA(Ala) + H2O = tRNA(Ala) + glycine + H(+). It catalyses the reaction a D-aminoacyl-tRNA + H2O = a tRNA + a D-alpha-amino acid + H(+). Functionally, an aminoacyl-tRNA editing enzyme that deacylates mischarged D-aminoacyl-tRNAs. Also deacylates mischarged glycyl-tRNA(Ala), protecting cells against glycine mischarging by AlaRS. Acts via tRNA-based rather than protein-based catalysis; rejects L-amino acids rather than detecting D-amino acids in the active site. By recycling D-aminoacyl-tRNA to D-amino acids and free tRNA molecules, this enzyme counteracts the toxicity associated with the formation of D-aminoacyl-tRNA entities in vivo and helps enforce protein L-homochirality. This is D-aminoacyl-tRNA deacylase from Listeria monocytogenes serotype 4a (strain HCC23).